The following is a 96-amino-acid chain: Early E1A 11 kDa protein (96 aa).

Disordered regions lie at residues 1 to 29 (MNSRMRRWAATSRLLHEDPPATPPSQDQQ) and 72 to 96 (LAQGEEEEEEEDGAEDIEENGEESD). Over residues 75–96 (GEEEEEEEDGAEDIEENGEESD) the composition is skewed to acidic residues.

This is Early E1A 11 kDa protein from Murine adenovirus A serotype 1 (MAdV-1).